We begin with the raw amino-acid sequence, 211 residues long: HTH-type transcriptional repressor FabR (211 aa).

The 61-residue stretch at 10–70 folds into the HTH tetR-type domain; that stretch reads RTRRSLIEAA…TMVDESGLML (61 aa). Positions 33–52 form a DNA-binding region, H-T-H motif; that stretch reads SLREVSREAGIAPTSFYRHF.

In terms of assembly, homodimer.

Its subcellular location is the cytoplasm. Functionally, represses the transcription of fabB, involved in unsaturated fatty acid (UFA) biosynthesis. By controlling UFA production, FabR directly influences the physical properties of the membrane bilayer. In Yersinia pseudotuberculosis serotype O:1b (strain IP 31758), this protein is HTH-type transcriptional repressor FabR.